A 658-amino-acid polypeptide reads, in one-letter code: Cysteine-rich receptor-like protein kinase 36 (658 aa).

The signal sequence occupies residues methionine 1–threonine 26. Gnk2-homologous domains follow at residues threonine 27–arginine 128 and asparagine 139–phenylalanine 246. Residues threonine 27 to serine 281 lie on the Extracellular side of the membrane. 5 N-linked (GlcNAc...) asparagine glycosylation sites follow: asparagine 38, asparagine 64, asparagine 116, asparagine 150, and asparagine 163. The helical transmembrane segment at valine 282–alanine 302 threads the bilayer. Residues tyrosine 303–arginine 658 lie on the Cytoplasmic side of the membrane. Residues phenylalanine 340–phenylalanine 612 form the Protein kinase domain. ATP-binding positions include leucine 346 to valine 354 and lysine 368. Tyrosine 413 bears the Phosphotyrosine mark. The Proton acceptor role is filled by aspartate 465. The residue at position 469 (serine 469) is a Phosphoserine. Position 505 is a phosphothreonine (threonine 505). At tyrosine 513 the chain carries Phosphotyrosine.

It belongs to the protein kinase superfamily. Ser/Thr protein kinase family. CRK subfamily. In terms of assembly, interacts with CRK45. Post-translationally, autophosphorylated.

It is found in the cell membrane. The enzyme catalyses L-seryl-[protein] + ATP = O-phospho-L-seryl-[protein] + ADP + H(+). It carries out the reaction L-threonyl-[protein] + ATP = O-phospho-L-threonyl-[protein] + ADP + H(+). In terms of biological role, forms a complex with CRK45 that may negatively control abscisic acid (ABA) and osmotic stress signal transduction. Can phosphorylate CRK45 in vitro. This chain is Cysteine-rich receptor-like protein kinase 36, found in Arabidopsis thaliana (Mouse-ear cress).